A 59-amino-acid chain; its full sequence is Small, acid-soluble spore protein H (59 aa).

The protein belongs to the SspH family.

It is found in the spore core. The sequence is that of Small, acid-soluble spore protein H from Alkaliphilus metalliredigens (strain QYMF).